Here is a 242-residue protein sequence, read N- to C-terminus: Triosephosphate isomerase (242 aa).

Residue 8–10 (NWK) participates in substrate binding. The active-site Electrophile is histidine 98. Glutamate 167 functions as the Proton acceptor in the catalytic mechanism. Residues glycine 173, serine 205, and 226-227 (GG) contribute to the substrate site.

Belongs to the triosephosphate isomerase family. In terms of assembly, homodimer.

Its subcellular location is the cytoplasm. The catalysed reaction is D-glyceraldehyde 3-phosphate = dihydroxyacetone phosphate. Its pathway is carbohydrate biosynthesis; gluconeogenesis. The protein operates within carbohydrate degradation; glycolysis; D-glyceraldehyde 3-phosphate from glycerone phosphate: step 1/1. Its function is as follows. Involved in the gluconeogenesis. Catalyzes stereospecifically the conversion of dihydroxyacetone phosphate (DHAP) to D-glyceraldehyde-3-phosphate (G3P). In Mesomycoplasma hyopneumoniae (strain 7448) (Mycoplasma hyopneumoniae), this protein is Triosephosphate isomerase.